An 83-amino-acid chain; its full sequence is Exodeoxyribonuclease 7 small subunit (83 aa).

This sequence belongs to the XseB family. Heterooligomer composed of large and small subunits.

The protein localises to the cytoplasm. The catalysed reaction is Exonucleolytic cleavage in either 5'- to 3'- or 3'- to 5'-direction to yield nucleoside 5'-phosphates.. Functionally, bidirectionally degrades single-stranded DNA into large acid-insoluble oligonucleotides, which are then degraded further into small acid-soluble oligonucleotides. This Mesorhizobium japonicum (strain LMG 29417 / CECT 9101 / MAFF 303099) (Mesorhizobium loti (strain MAFF 303099)) protein is Exodeoxyribonuclease 7 small subunit.